Here is a 490-residue protein sequence, read N- to C-terminus: Betaine aldehyde dehydrogenase (490 aa).

Thr26, Ile27, and Asp93 together coordinate K(+). 150-152 (GAW) lines the NAD(+) pocket. Lys162 functions as the Charge relay system in the catalytic mechanism. An NAD(+)-binding site is contributed by 176-179 (KPSE). Val180 provides a ligand contact to K(+). 230 to 233 (GVAS) contacts NAD(+). Leu246 lines the K(+) pocket. Catalysis depends on Glu252, which acts as the Proton acceptor. Residues Gly254, Cys286, and Glu387 each contribute to the NAD(+) site. Cys286 functions as the Nucleophile in the catalytic mechanism. The residue at position 286 (Cys286) is a Cysteine sulfenic acid (-SOH). K(+) is bound by residues Lys457 and Gly460. Residue Glu464 is the Charge relay system of the active site.

Belongs to the aldehyde dehydrogenase family. As to quaternary structure, dimer of dimers. Requires K(+) as cofactor.

It carries out the reaction betaine aldehyde + NAD(+) + H2O = glycine betaine + NADH + 2 H(+). The protein operates within amine and polyamine biosynthesis; betaine biosynthesis via choline pathway; betaine from betaine aldehyde: step 1/1. Involved in the biosynthesis of the osmoprotectant glycine betaine. Catalyzes the irreversible oxidation of betaine aldehyde to the corresponding acid. This is Betaine aldehyde dehydrogenase from Escherichia coli O9:H4 (strain HS).